The following is a 131-amino-acid chain: Small ribosomal subunit protein uS8 (131 aa).

The interval 1-27 (MSMTDPVADMLTRIRNGQRASKNEVSM) is disordered.

This sequence belongs to the universal ribosomal protein uS8 family. As to quaternary structure, part of the 30S ribosomal subunit. Contacts proteins S5 and S12.

One of the primary rRNA binding proteins, it binds directly to 16S rRNA central domain where it helps coordinate assembly of the platform of the 30S subunit. This is Small ribosomal subunit protein uS8 from Thioalkalivibrio sulfidiphilus (strain HL-EbGR7).